The chain runs to 278 residues: Deoxyuridine 5'-triphosphate nucleotidohydrolase (278 aa).

Substrate contacts are provided by residues 171 to 173 and 273 to 274; these read RSG and FG.

Belongs to the dUTPase family. Mg(2+) is required as a cofactor.

It catalyses the reaction dUTP + H2O = dUMP + diphosphate + H(+). Functionally, involved in nucleotide metabolism: produces dUMP, the immediate precursor of thymidine nucleotides and decreases the intracellular concentration of dUTP to avoid uracil incorporation into viral DNA. This chain is Deoxyuridine 5'-triphosphate nucleotidohydrolase, found in Homo sapiens (Human).